Consider the following 744-residue polypeptide: 5-methyltetrahydropteroyltriglutamate--homocysteine methyltransferase (744 aa).

5-methyltetrahydropteroyltri-L-glutamate is bound by residues 17-20 (REVK) and lysine 110. L-homocysteine-binding positions include 422 to 424 (IGS) and glutamate 475. Residues 422–424 (IGS) and glutamate 475 contribute to the L-methionine site. Residue tryptophan 552 coordinates 5-methyltetrahydropteroyltri-L-glutamate. Aspartate 590 contributes to the L-homocysteine binding site. L-methionine is bound at residue aspartate 590. Residue glutamate 596 participates in 5-methyltetrahydropteroyltri-L-glutamate binding. Residues histidine 632, cysteine 634, and glutamate 656 each coordinate Zn(2+). Residue histidine 685 is the Proton donor of the active site. Cysteine 717 is a Zn(2+) binding site.

This sequence belongs to the vitamin-B12 independent methionine synthase family. The cofactor is Zn(2+).

The catalysed reaction is 5-methyltetrahydropteroyltri-L-glutamate + L-homocysteine = tetrahydropteroyltri-L-glutamate + L-methionine. It functions in the pathway amino-acid biosynthesis; L-methionine biosynthesis via de novo pathway; L-methionine from L-homocysteine (MetE route): step 1/1. Its function is as follows. Catalyzes the transfer of a methyl group from 5-methyltetrahydrofolate to homocysteine resulting in methionine formation. The protein is 5-methyltetrahydropteroyltriglutamate--homocysteine methyltransferase of Trichodesmium erythraeum (strain IMS101).